The sequence spans 131 residues: Histone H2A type 1-A (131 aa).

A disordered region spans residues 1 to 23; that stretch reads MSGRGKQGGKARAKSKSRSSRAG. An N-acetylserine modification is found at Ser-2. Phosphoserine; by RPS6KA5 is present on Ser-2. Arg-4 is subject to Citrulline; alternate. Symmetric dimethylarginine; by PRMT5; alternate is present on Arg-4. Lys-6 carries the N6-(2-hydroxyisobutyryl)lysine modification. Residues 7–19 are compositionally biased toward basic residues; that stretch reads QGGKARAKSKSRS. N6-(2-hydroxyisobutyryl)lysine; alternate is present on Lys-10. N6-(beta-hydroxybutyryl)lysine; alternate is present on Lys-10. The residue at position 10 (Lys-10) is an N6-lactoyllysine; alternate. An N6-succinyllysine; alternate modification is found at Lys-10. Residue Lys-14 is modified to N6-(beta-hydroxybutyryl)lysine. Glycyl lysine isopeptide (Lys-Gly) (interchain with G-Cter in ubiquitin) cross-links involve residues Lys-14 and Lys-16. Lys-37 carries the N6-(2-hydroxyisobutyryl)lysine; alternate modification. Lys-37 carries the post-translational modification N6-(beta-hydroxybutyryl)lysine; alternate. Lys-37 carries the N6-crotonyllysine; alternate modification. Lys-75 and Lys-76 each carry N6-(2-hydroxyisobutyryl)lysine. N6-(2-hydroxyisobutyryl)lysine; alternate is present on Lys-96. The residue at position 96 (Lys-96) is an N6-(beta-hydroxybutyryl)lysine; alternate. The residue at position 96 (Lys-96) is an N6-succinyllysine; alternate. Position 96 is an N6-glutaryllysine; alternate (Lys-96). An N5-methylglutamine modification is found at Gln-105. Lys-119 bears the N6-(2-hydroxyisobutyryl)lysine; alternate mark. An N6-(beta-hydroxybutyryl)lysine; alternate modification is found at Lys-119. Lys-119 and Lys-120 each carry N6-crotonyllysine; alternate. Residues Lys-119 and Lys-120 each carry the N6-glutaryllysine; alternate modification. Residue Lys-120 forms a Glycyl lysine isopeptide (Lys-Gly) (interchain with G-Cter in ubiquitin); alternate linkage. Thr-121 is subject to Phosphothreonine; by DCAF1. At Lys-127 the chain carries N6-crotonyllysine.

Belongs to the histone H2A family. As to quaternary structure, the nucleosome is a histone octamer containing two molecules each of H2A, H2B, H3 and H4 assembled in one H3-H4 heterotetramer and two H2A-H2B heterodimers. The octamer wraps approximately 147 bp of DNA. Post-translationally, deiminated on Arg-4 in granulocytes upon calcium entry. Monoubiquitination of Lys-120 (H2AK119Ub) by RING1, TRIM37 and RNF2/RING2 complex gives a specific tag for epigenetic transcriptional repression and participates in X chromosome inactivation of female mammals. It is involved in the initiation of both imprinted and random X inactivation. Ubiquitinated H2A is enriched in inactive X chromosome chromatin. Ubiquitination of H2A functions downstream of methylation of 'Lys-27' of histone H3 (H3K27me). H2AK119Ub by RNF2/RING2 can also be induced by ultraviolet and may be involved in DNA repair. Monoubiquitination of Lys-120 (H2AK119Ub) by TRIM37 may promote transformation of cells in a number of breast cancers. Following DNA double-strand breaks (DSBs), it is ubiquitinated through 'Lys-63' linkage of ubiquitin moieties by the E2 ligase UBE2N and the E3 ligases RNF8 and RNF168, leading to the recruitment of repair proteins to sites of DNA damage. Ubiquitination at Lys-14 and Lys-16 (H2AK13Ub and H2AK15Ub, respectively) in response to DNA damage is initiated by RNF168 that mediates monoubiquitination at these 2 sites, and 'Lys-63'-linked ubiquitin are then conjugated to monoubiquitin; RNF8 is able to extend 'Lys-63'-linked ubiquitin chains in vitro. Deubiquitinated by USP51 at Lys-14 and Lys-16 (H2AK13Ub and H2AK15Ub, respectively) after damaged DNA is repaired. H2AK119Ub and ionizing radiation-induced 'Lys-63'-linked ubiquitination (H2AK13Ub and H2AK15Ub) are distinct events. In terms of processing, phosphorylation on Ser-2 (H2AS1ph) is enhanced during mitosis. Phosphorylation on Ser-2 by RPS6KA5/MSK1 directly represses transcription. Acetylation of H3 inhibits Ser-2 phosphorylation by RPS6KA5/MSK1. Phosphorylation at Thr-121 (H2AT120ph) by DCAF1 is present in the regulatory region of many tumor suppresor genes and down-regulates their transcription. Post-translationally, glutamine methylation at Gln-105 (H2AQ104me) by FBL is specifically dedicated to polymerase I. It is present at 35S ribosomal DNA locus and impairs binding of the FACT complex. Symmetric dimethylation on Arg-4 by the PRDM1/PRMT5 complex may play a crucial role in the germ-cell lineage. In terms of processing, crotonylation (Kcr) is specifically present in male germ cells and marks testis-specific genes in post-meiotic cells, including X-linked genes that escape sex chromosome inactivation in haploid cells. Crotonylation marks active promoters and enhancers and confers resistance to transcriptional repressors. It is also associated with post-meiotically activated genes on autosomes. Post-translationally, lactylated in macrophages by EP300/P300 by using lactoyl-CoA directly derived from endogenous or exogenous lactate, leading to stimulates gene transcription.

It is found in the nucleus. The protein resides in the chromosome. Its function is as follows. Core component of nucleosome. Nucleosomes wrap and compact DNA into chromatin, limiting DNA accessibility to the cellular machineries which require DNA as a template. Histones thereby play a central role in transcription regulation, DNA repair, DNA replication and chromosomal stability. DNA accessibility is regulated via a complex set of post-translational modifications of histones, also called histone code, and nucleosome remodeling. The protein is Histone H2A type 1-A of Homo sapiens (Human).